The chain runs to 314 residues: MKKLKIVFAGTEYFSAEHLHALITSSHDVISVITQPDRYSGRGQKITFSPVKILSLNNGIPIFQPENLNDTDFQNKLLKLNADIMTVVSYGKIIPKKILNMFSKGCINVHASLLPRWRGATPIQSSILHGDKKTGISIIQMNDEIDSGNIMHSITCSISSKDTTKTLSLKLIKIGIEALLEVLEKIILNTVIYKKQNEKNVILSKKIYKKDALLDWNLSAEKLERLIRAFNPWPICYFLSQNKNIKVWQSEVIPITQNNRSVGEIISYNKNGIQINTSHQILNIKKLQFPGKKIIDVKNVIISKKKLFKIGTIL.

112 to 115 is a (6S)-5,6,7,8-tetrahydrofolate binding site; that stretch reads SLLP.

Belongs to the Fmt family.

The enzyme catalyses L-methionyl-tRNA(fMet) + (6R)-10-formyltetrahydrofolate = N-formyl-L-methionyl-tRNA(fMet) + (6S)-5,6,7,8-tetrahydrofolate + H(+). Functionally, attaches a formyl group to the free amino group of methionyl-tRNA(fMet). The formyl group appears to play a dual role in the initiator identity of N-formylmethionyl-tRNA by promoting its recognition by IF2 and preventing the misappropriation of this tRNA by the elongation apparatus. This chain is Methionyl-tRNA formyltransferase, found in Buchnera aphidicola subsp. Acyrthosiphon pisum (strain 5A).